A 205-amino-acid chain; its full sequence is Anaerobic dimethyl sulfoxide reductase chain B (205 aa).

4Fe-4S ferredoxin-type domains lie at Tyr5–Glu33, Phe59–Asp89, and Gly90–Thr119. Cys14, Cys17, Cys20, Cys24, Cys67, Cys70, Cys75, Cys79, Cys99, Cys102, Cys105, Cys109, Cys126, Cys129, Cys141, and Cys145 together coordinate [4Fe-4S] cluster. The interval Lys184 to Val205 is disordered. Residues Asn186 to Thr195 show a composition bias toward polar residues.

In terms of assembly, heterotrimeric enzyme composed of a catalytic heterodimer (DmsAB) and a membrane anchor protein (DmsC). It depends on [4Fe-4S] cluster as a cofactor.

Electron transfer subunit of the terminal reductase during anaerobic growth on various sulfoxide and N-oxide compounds. This Escherichia coli (strain K12) protein is Anaerobic dimethyl sulfoxide reductase chain B (dmsB).